The following is a 332-amino-acid chain: Ribosomal RNA small subunit methyltransferase H (332 aa).

S-adenosyl-L-methionine-binding positions include 39-41 (GGY), D56, F83, D100, and Q107.

This sequence belongs to the methyltransferase superfamily. RsmH family.

Its subcellular location is the cytoplasm. It catalyses the reaction cytidine(1402) in 16S rRNA + S-adenosyl-L-methionine = N(4)-methylcytidine(1402) in 16S rRNA + S-adenosyl-L-homocysteine + H(+). Specifically methylates the N4 position of cytidine in position 1402 (C1402) of 16S rRNA. The chain is Ribosomal RNA small subunit methyltransferase H from Bartonella tribocorum (strain CIP 105476 / IBS 506).